We begin with the raw amino-acid sequence, 175 residues long: Coagulogen (175 aa).

8 disulfides stabilise this stretch: C8–C167, C10–C95, C60–C161, C65–C121, C75–C168, C88–C140, C127–C170, and C134–C172.

The protein belongs to the coagulin family. As to quaternary structure, coagulogen is cleaved after Arg-18 and Arg-46 by a clotting enzyme contained in the hemocyte and activated by a bacterial endotoxin (lipopolysaccharide). This cleavage releases the peptide C and leaves 2 chains of coagulin, A and B, linked by two disulfide bonds. Coagulin molecules interlink to form a gel. As to expression, hemolymph.

The protein resides in the secreted. Its function is as follows. Coagulogen is a gel-forming protein of hemolymph; it hinders the spread of invaders by immobilizing them. This is Coagulogen from Tachypleus gigas (Southeast Asian horseshoe crab).